The primary structure comprises 1893 residues: Plexin-A4 (1893 aa).

The signal sequence occupies residues 1–23 (MKAMPWNWTCLLSHLLVVGMGSS). Residues 24-506 (TLLPRQPPQL…SERQLTRVPV (483 aa)) enclose the Sema domain. The Extracellular portion of the chain corresponds to 24–1236 (TLLPRQPPQL…IAPDSPLSLP (1213 aa)). Cystine bridges form between cysteine 94–cysteine 103, cysteine 129–cysteine 137, cysteine 283–cysteine 404, cysteine 299–cysteine 355, cysteine 373–cysteine 392, cysteine 509–cysteine 526, cysteine 515–cysteine 557, cysteine 518–cysteine 535, cysteine 529–cysteine 541, and cysteine 592–cysteine 611. One can recognise a PSI 1 domain in the interval 508-558 (SCGQYRSCGECLGSGDPHCGWCVLHNTCTRKERCERSREPRRFASEMKQCV). N-linked (GlcNAc...) asparagine glycosylation occurs at asparagine 654. 2 consecutive PSI domains span residues 654 to 701 (NCSV…EDCP) and 802 to 855 (KCGA…SKCT). 4 consecutive IPT/TIG domains span residues 857–951 (PRIT…YYFM), 953–1036 (LTLA…FQYV), 1039–1138 (PTIV…FTYY), and 1141–1229 (PVFE…YIAP). N-linked (GlcNAc...) asparagine glycosylation is found at asparagine 1006, asparagine 1131, and asparagine 1179. The chain crosses the membrane as a helical span at residues 1237-1257 (AIVSIAVAGGLLIIFIVAVLI). Residues 1258-1893 (AYKRKSRESD…QVITLMSLDS (636 aa)) are Cytoplasmic-facing. Residue lysine 1349 is modified to N6-acetyllysine.

The protein belongs to the plexin family. As to quaternary structure, interacts with NRP1 and NRP2. As to expression, expressed in the developing nervous system. Widely expressed in both the central and peripheral nervous systems. Expressed in the peripheral ganglia, somatosensory, olfactory, visual, auditory and equilibrium systems.

It is found in the cell membrane. Its function is as follows. Coreceptor for SEMA3A. Necessary for signaling by class 3 semaphorins and subsequent remodeling of the cytoskeleton. Plays a role in axon guidance in the developing nervous system. Class 3 semaphorins bind to a complex composed of a neuropilin and a plexin. The plexin modulates the affinity of the complex for specific semaphorins, and its cytoplasmic domain is required for the activation of down-stream signaling events in the cytoplasm. The chain is Plexin-A4 (Plxna4) from Mus musculus (Mouse).